The following is a 98-amino-acid chain: ATP synthase subunit c (98 aa).

2 helical membrane passes run 27-47 (ALAL…GLGL) and 73-93 (IIGA…FFVV).

Belongs to the ATPase C chain family. In terms of assembly, F-type ATPases have 2 components, F(1) - the catalytic core - and F(0) - the membrane proton channel. F(1) has five subunits: alpha(3), beta(3), gamma(1), delta(1), epsilon(1). F(0) has three main subunits: a(1), b(2) and c(10-14). The alpha and beta chains form an alternating ring which encloses part of the gamma chain. F(1) is attached to F(0) by a central stalk formed by the gamma and epsilon chains, while a peripheral stalk is formed by the delta and b chains.

It localises to the cell inner membrane. In terms of biological role, f(1)F(0) ATP synthase produces ATP from ADP in the presence of a proton or sodium gradient. F-type ATPases consist of two structural domains, F(1) containing the extramembraneous catalytic core and F(0) containing the membrane proton channel, linked together by a central stalk and a peripheral stalk. During catalysis, ATP synthesis in the catalytic domain of F(1) is coupled via a rotary mechanism of the central stalk subunits to proton translocation. Its function is as follows. Key component of the F(0) channel; it plays a direct role in translocation across the membrane. A homomeric c-ring of between 10-14 subunits forms the central stalk rotor element with the F(1) delta and epsilon subunits. In Protochlamydia amoebophila (strain UWE25), this protein is ATP synthase subunit c.